Consider the following 791-residue polypeptide: DUF1769 family protein duc1 (791 aa).

The tract at residues 158-189 is disordered; that stretch reads ADSQESDTESLPEINDSSDVSLSDLPSTNVTP. Low complexity predominate over residues 174–184; sequence SSDVSLSDLPS. The short motif at 373 to 379 is the FFAT element; that stretch reads RYFTALE. At Y374 the chain carries Phosphotyrosine. T376 is modified (phosphothreonine). Disordered regions lie at residues 381–505, 542–606, and 630–658; these read QQDQ…SNRR, NVAG…VDGK, and PKPV…NLDP. A compositionally biased stretch (basic residues) spans 415–426; sequence LIKRMSLRSKKS. A compositionally biased stretch (low complexity) spans 444–453; it reads STASAASTSA. Residues 455–473 are compositionally biased toward basic and acidic residues; that stretch reads KTEKEKKMSAPRRSLDKLI. A phosphoserine mark is found at S477 and S493. Basic residues predominate over residues 477–487; it reads SLHRHHHHHHK. The segment covering 555 to 564 has biased composition (polar residues); the sequence is EQTSITSGVP. Position 574 is a phosphoserine (S574). Positions 574–586 are enriched in basic and acidic residues; it reads STPEKIVEERSID. Residues 587 to 601 show a composition bias toward polar residues; the sequence is EVSQSNTPSSKQLPQ.

This sequence belongs to the UPF0590 family. Interacts (via FFAT-motif) with scs2 (via MSP domain); the interaction is direct and serves to restrict the localization of duc1 to areas of cell membrane-endoplasmic reticulum contact sites, and away from the cell division site.

It is found in the cell membrane. Its function is as follows. Promotes the proper distribution of phosphatidylinositol 4,5-bisphosphate (PtdIns(4,5)P2/PIP2) synthesis at the cell membrane. May bind phosphatidylinositol 4,5-bisphosphate (PtdIns(4,5)P2/PIP2) and is required for robust anchoring of the contractile ring to the cell membrane. The protein is DUF1769 family protein duc1 of Schizosaccharomyces pombe (strain 972 / ATCC 24843) (Fission yeast).